Reading from the N-terminus, the 193-residue chain is Allatostatin A (193 aa).

The first 25 residues, Met1–Ala25, serve as a signal peptide directing secretion. The propeptide occupies Ala26–Tyr64. Ile74 carries the post-translational modification Isoleucine amide. Residues Trp78–Asp84 constitute a propeptide that is removed on maturation. An isoleucine amide mark is found at Ile94 and Ile105. The propeptide occupies Asn109 to Asp139. Ile150 is subject to Isoleucine amide. Residue Ser165 is modified to Serine amide. A propeptide spanning residues Leu169–Gln193 is cleaved from the precursor.

This sequence belongs to the allatostatin family. As to expression, allatostatins A1, A2 and A3 are expressed in brain, antennal lobes, optical lobes, gnathal ganglia, the retrocerebral complex and thoracic, abdominal and ventral ganglia. Allatostain A4 is expressed in brain (at protein level).

The protein resides in the secreted. Its function is as follows. May act as a neurotransmitter or neuromodulator. The sequence is that of Allatostatin A from Camponotus floridanus (Florida carpenter ant).